We begin with the raw amino-acid sequence, 651 residues long: Acetyl-coenzyme A synthetase (651 aa).

CoA is bound by residues arginine 191–lysine 194, threonine 311, and asparagine 335. Residues glycine 387–proline 389, aspartate 411–threonine 416, aspartate 500, and arginine 515 each bind ATP. CoA is bound at residue serine 523. Arginine 526 is an ATP binding site. Positions 537, 539, and 542 each coordinate Mg(2+). CoA is bound at residue arginine 584. Lysine 609 is subject to N6-acetyllysine.

Belongs to the ATP-dependent AMP-binding enzyme family. Mg(2+) is required as a cofactor. Acetylated. Deacetylation by the SIR2-homolog deacetylase activates the enzyme.

It carries out the reaction acetate + ATP + CoA = acetyl-CoA + AMP + diphosphate. Catalyzes the conversion of acetate into acetyl-CoA (AcCoA), an essential intermediate at the junction of anabolic and catabolic pathways. AcsA undergoes a two-step reaction. In the first half reaction, AcsA combines acetate with ATP to form acetyl-adenylate (AcAMP) intermediate. In the second half reaction, it can then transfer the acetyl group from AcAMP to the sulfhydryl group of CoA, forming the product AcCoA. The chain is Acetyl-coenzyme A synthetase from Pseudomonas syringae pv. tomato (strain ATCC BAA-871 / DC3000).